The following is a 132-amino-acid chain: Small ribosomal subunit protein uS9 (132 aa).

It belongs to the universal ribosomal protein uS9 family.

In Leptospira interrogans serogroup Icterohaemorrhagiae serovar copenhageni (strain Fiocruz L1-130), this protein is Small ribosomal subunit protein uS9.